Reading from the N-terminus, the 78-residue chain is MAPLRGAELVQTPLQLYRYLLRCCRQLPTKGIQEHYKHAVRQSFQVHSDEDNPERIQQIIRRAIEDADWIMNKYKKQN.

The protein belongs to the complex I LYR family. LYRM9 subfamily.

The chain is LYR motif-containing protein 9 (Lyrm9) from Rattus norvegicus (Rat).